Consider the following 609-residue polypeptide: Protein tesmin/TSO1-like CXC 3 (609 aa).

Positions E69 to V84 are enriched in basic and acidic residues. Disordered regions lie at residues E69–D102, P307–K328, L457–Q477, and N569–H609. One can recognise a CRC domain in the interval S326 to G451. Over residues T466–Q477 the composition is skewed to polar residues.

This sequence belongs to the lin-54 family. Ubiquitous but expressed mostly in flowers and at significant levels in leaves. Detected with highest levels in developing ovules and microspores, and in petals.

The protein resides in the nucleus. Functionally, plays a role in development of both male and female reproductive tissues. This Arabidopsis thaliana (Mouse-ear cress) protein is Protein tesmin/TSO1-like CXC 3 (TCX3).